The following is a 357-amino-acid chain: Holliday junction branch migration complex subunit RuvB (357 aa).

Residues 1–20 (MDDHDDSPVSPSFLKSDGEI) form a disordered region. Residues 1–185 (MDDHDDSPVS…FGFTGHMDFY (185 aa)) form a large ATPase domain (RuvB-L) region. ATP contacts are provided by residues Leu24, Arg25, Gly66, Lys69, Thr70, Ser71, 132–134 (EDF), Arg175, Tyr185, and Arg222. Residue Thr70 coordinates Mg(2+). Residues 186 to 256 (EPGELLRILE…VARAALEVYD (71 aa)) are small ATPAse domain (RuvB-S). A head domain (RuvB-H) region spans residues 259-357 (TLGLDRLDRA…TSQPTLDLFD (99 aa)). 2 residues coordinate DNA: Arg314 and Arg319.

This sequence belongs to the RuvB family. Homohexamer. Forms an RuvA(8)-RuvB(12)-Holliday junction (HJ) complex. HJ DNA is sandwiched between 2 RuvA tetramers; dsDNA enters through RuvA and exits via RuvB. An RuvB hexamer assembles on each DNA strand where it exits the tetramer. Each RuvB hexamer is contacted by two RuvA subunits (via domain III) on 2 adjacent RuvB subunits; this complex drives branch migration. In the full resolvosome a probable DNA-RuvA(4)-RuvB(12)-RuvC(2) complex forms which resolves the HJ.

It is found in the cytoplasm. The enzyme catalyses ATP + H2O = ADP + phosphate + H(+). The RuvA-RuvB-RuvC complex processes Holliday junction (HJ) DNA during genetic recombination and DNA repair, while the RuvA-RuvB complex plays an important role in the rescue of blocked DNA replication forks via replication fork reversal (RFR). RuvA specifically binds to HJ cruciform DNA, conferring on it an open structure. The RuvB hexamer acts as an ATP-dependent pump, pulling dsDNA into and through the RuvAB complex. RuvB forms 2 homohexamers on either side of HJ DNA bound by 1 or 2 RuvA tetramers; 4 subunits per hexamer contact DNA at a time. Coordinated motions by a converter formed by DNA-disengaged RuvB subunits stimulates ATP hydrolysis and nucleotide exchange. Immobilization of the converter enables RuvB to convert the ATP-contained energy into a lever motion, pulling 2 nucleotides of DNA out of the RuvA tetramer per ATP hydrolyzed, thus driving DNA branch migration. The RuvB motors rotate together with the DNA substrate, which together with the progressing nucleotide cycle form the mechanistic basis for DNA recombination by continuous HJ branch migration. Branch migration allows RuvC to scan DNA until it finds its consensus sequence, where it cleaves and resolves cruciform DNA. The protein is Holliday junction branch migration complex subunit RuvB of Nocardia farcinica (strain IFM 10152).